The primary structure comprises 210 residues: 3,4-dihydroxy-2-butanone 4-phosphate synthase (210 aa).

Residues 33–34 (RE), Asp38, 146–150 (RRGHT), and Glu170 contribute to the D-ribulose 5-phosphate site. Glu34 is a Mg(2+) binding site. His149 is a Mg(2+) binding site.

It belongs to the DHBP synthase family. In terms of assembly, homodimer. The cofactor is Mg(2+). Requires Mn(2+) as cofactor.

The catalysed reaction is D-ribulose 5-phosphate = (2S)-2-hydroxy-3-oxobutyl phosphate + formate + H(+). Its pathway is cofactor biosynthesis; riboflavin biosynthesis; 2-hydroxy-3-oxobutyl phosphate from D-ribulose 5-phosphate: step 1/1. Its function is as follows. Catalyzes the conversion of D-ribulose 5-phosphate to formate and 3,4-dihydroxy-2-butanone 4-phosphate. The chain is 3,4-dihydroxy-2-butanone 4-phosphate synthase from Chromobacterium violaceum (strain ATCC 12472 / DSM 30191 / JCM 1249 / CCUG 213 / NBRC 12614 / NCIMB 9131 / NCTC 9757 / MK).